Reading from the N-terminus, the 178-residue chain is Probetacellulin (178 aa).

The first 31 residues, 1–31, serve as a signal peptide directing secretion; that stretch reads MDRAARCSGASSLPLLLALALGLVILHCVVA. Residues 32–118 are Extracellular-facing; that stretch reads DGNSTRSPET…LFYLRGDRGQ (87 aa). N-linked (GlcNAc...) asparagine glycosylation is present at N34. Residues 65-105 form the EGF-like domain; sequence HFSRCPKQYKHYCIKGRCRFVVAEQTPSCVCDEGYIGARCE. Intrachain disulfides connect C69/C82, C77/C93, and C95/C104. Residues 112-178 constitute a propeptide, removed in mature form; that stretch reads LRGDRGQILV…NEDIEETNIA (67 aa). The helical transmembrane segment at 119–139 threads the bilayer; the sequence is ILVICLIAVMVVFIILVIGVC. At 140-178 the chain is on the cytoplasmic side; the sequence is TCCHPLRKRRKRKKKEEEMETLGKDITPINEDIEETNIA.

As to quaternary structure, monomer. Interacts with EGFR and ERBB4. Synthesized in several tissues and tumor cells. Predominantly expressed in pancreas and small intestine.

Its subcellular location is the secreted. It localises to the extracellular space. The protein resides in the cell membrane. Its function is as follows. Growth factor that binds to EGFR, ERBB4 and other EGF receptor family members. Potent mitogen for retinal pigment epithelial cells and vascular smooth muscle cells. This chain is Probetacellulin (BTC), found in Homo sapiens (Human).